Consider the following 321-residue polypeptide: Probable E3 ubiquitin-protein ligase BAH1-like 1 (321 aa).

The SPX domain maps to Met-1 to Ala-149. The RING-type zinc-finger motif lies at Cys-217 to Arg-266.

It belongs to the RING-type zinc finger family.

The catalysed reaction is S-ubiquitinyl-[E2 ubiquitin-conjugating enzyme]-L-cysteine + [acceptor protein]-L-lysine = [E2 ubiquitin-conjugating enzyme]-L-cysteine + N(6)-ubiquitinyl-[acceptor protein]-L-lysine.. It participates in protein modification; protein ubiquitination. The chain is Probable E3 ubiquitin-protein ligase BAH1-like 1 from Oryza sativa subsp. indica (Rice).